The sequence spans 135 residues: METKNLTIGERIRYRRKNLKHTQRSLAKALKISHVSVSQWERGDSEPTGKNLFALSKVLQCSPTWILFGDEDKQPTPPVEKPVALSPKELELLELFNALPESEQDTQLAEMRARVKNFNKLFEELLKARQRTNKR.

Residues 12–66 (IRYRRKNLKHTQRSLAKALKISHVSVSQWERGDSEPTGKNLFALSKVLQCSPTWI) enclose the HTH cro/C1-type domain. Residues 23 to 42 (QRSLAKALKISHVSVSQWER) constitute a DNA-binding region (H-T-H motif).

This protein is a repressor of division inhibition gene dicB. The chain is HTH-type transcriptional regulator DicA (dicA) from Escherichia coli (strain K12).